We begin with the raw amino-acid sequence, 339 residues long: NADH-quinone oxidoreductase subunit H (339 aa).

The next 8 membrane-spanning stretches (helical) occupy residues 7-27 (LFWITLKIMALVVPLMLAVAY), 77-97 (VLFVIAPLLAIMPALAAWAVI), 112-132 (LLYILAMTSLGVYGIIIAGWA), 149-169 (VVSYEIAMGFALVGVLMAAGS), 180-200 (AGGIFHWFWLPLLPLFLVYWI), 235-255 (VFFLAEYANMILISAVAAVMF), 276-296 (VPGVVWFMLKTAFFMFCYLWF), and 315-335 (VLIPVTVVWLIVLTIFIVTGF).

Belongs to the complex I subunit 1 family. As to quaternary structure, NDH-1 is composed of 14 different subunits. Subunits NuoA, H, J, K, L, M, N constitute the membrane sector of the complex.

It localises to the cell inner membrane. It catalyses the reaction a quinone + NADH + 5 H(+)(in) = a quinol + NAD(+) + 4 H(+)(out). NDH-1 shuttles electrons from NADH, via FMN and iron-sulfur (Fe-S) centers, to quinones in the respiratory chain. The immediate electron acceptor for the enzyme in this species is believed to be ubiquinone. Couples the redox reaction to proton translocation (for every two electrons transferred, four hydrogen ions are translocated across the cytoplasmic membrane), and thus conserves the redox energy in a proton gradient. This subunit may bind ubiquinone. The polypeptide is NADH-quinone oxidoreductase subunit H (Alkalilimnicola ehrlichii (strain ATCC BAA-1101 / DSM 17681 / MLHE-1)).